The chain runs to 365 residues: 5-hydroxytryptamine receptor 1E (365 aa).

Topologically, residues 1–21 (MNITNCTTEASMAIRPKTITE) are extracellular. N-linked (GlcNAc...) asparagine glycosylation is found at Asn2 and Asn5. A helical membrane pass occupies residues 22 to 45 (KMLICMTLVVITTLTTLLNLAVIM). Residues 46 to 59 (AIGTTKKLHQPANY) lie on the Cytoplasmic side of the membrane. The helical transmembrane segment at 60 to 84 (LICSLAVTDLLVAVLVMPLSIIYIV) threads the bilayer. At 85 to 92 (MDRWKLGY) the chain is on the extracellular side. A helical transmembrane segment spans residues 93–118 (FLCEVWLSVDMTCCTCSILHLCVIAL). The cysteines at positions 95 and 173 are disulfide-linked. Asp102 and Cys106 together coordinate serotonin. The DRY motif; important for ligand-induced conformation changes motif lies at 119–121 (DRY). At 119–138 (DRYWAITNAIEYARKRTAKR) the chain is on the cytoplasmic side. A helical membrane pass occupies residues 139-157 (AALMILTVWTISIFISMPP). The Extracellular segment spans residues 158 to 179 (LFWRSHRRLSPPPSQCTIQHDH). A helical transmembrane segment spans residues 180–203 (VIYTIYSTLGAFYIPLTLILILYY). Over 204-291 (RIYHAAKSLY…SSTRERKAAR (88 aa)) the chain is Cytoplasmic. Residues 292–316 (ILGLILGAFILSWLPFFIKELIVGL) form a helical membrane-spanning segment. At 317–322 (SIYTVS) the chain is on the extracellular side. Residues 323 to 345 (SEVADFLTWLGYVNSLINPLLYT) form a helical membrane-spanning segment. Residues 340–344 (NPLLY) carry the NPxxY motif; important for ligand-induced conformation changes and signaling motif. The Cytoplasmic portion of the chain corresponds to 346-365 (SFNEDFKLAFKKLIRCREHT).

It belongs to the G-protein coupled receptor 1 family. In terms of tissue distribution, detected in brain.

It is found in the cell membrane. Its function is as follows. G-protein coupled receptor for 5-hydroxytryptamine (serotonin). Also functions as a receptor for various alkaloids and psychoactive substances. Ligand binding causes a conformation change that triggers signaling via guanine nucleotide-binding proteins (G proteins) and modulates the activity of downstream effectors, such as adenylate cyclase. HTR1E is coupled to G(i)/G(o) G alpha proteins and mediates inhibitory neurotransmission by inhibiting adenylate cyclase activity. The chain is 5-hydroxytryptamine receptor 1E from Homo sapiens (Human).